The primary structure comprises 581 residues: MAPAVLANLNEPLFLGQCGAVFMRKYTNQPLSGDINNPLFNPNPNPNSISAYGNNSSKHFDDSSAYGDYVSFDLDGYTSNQLRELKKRLNSELEEVRFLRERIESGTFVSGSVYTTQARSFAGETNDVGVKKTKTKKKKIGHGQKRSNPFATDEPSLKRHVALDLMSEKVLKSMMTTCGQILVKLMKHKWSWVFLNPVDVVGLGLHDYHRIVDKPMDLGTVKMNLEKGLYRSPIDFASDVRLTFTNAMSYNPKGQDVYLMAEKLLSQFDVWFNPTLKRFEAQEVKVMGSSSRPGPEDNQRVWNQNNVAENARKGPEQISIAKKLDSVKPLLPTLPPPPVIEITRDPSPPPSPVQPPPPPSPPPQPVNQVEASLEVRETNKGRKGKLPKPKAKDPNKREMTMDEKGKLGVNLQELPPEKLGQLIQILRKRTRDLPQDGDEIELDIEALDNETLWELDRFVTNYRKMASKIKRQGFIQNVSTPPRNMPPVTEMGSAEKRGRKGGEAGEEDVDIGEDIPVEDYPSVEIERDGTAAAASGGSSSSGSFSSSGSSSSSDSESGSSSGSDSDADSVQSPFVEAKEAP.

The segment at 130 to 153 (VKKTKTKKKKIGHGQKRSNPFATD) is disordered. Residues 131 to 145 (KKTKTKKKKIGHGQK) show a composition bias toward basic residues. The region spanning 169 to 275 (KVLKSMMTTC…SQFDVWFNPT (107 aa)) is the Bromo domain. 2 disordered regions span residues 329 to 399 (PLLP…KREM) and 470 to 581 (KRQG…KEAP). Residues 346-365 (PSPPPSPVQPPPPPSPPPQP) show a composition bias toward pro residues. The 82-residue stretch at 389–470 (PKAKDPNKRE…NYRKMASKIK (82 aa)) folds into the NET domain. Composition is skewed to basic and acidic residues over residues 390-399 (KAKDPNKREM) and 493-503 (SAEKRGRKGGE). The segment covering 504–517 (AGEEDVDIGEDIPV) has biased composition (acidic residues). Residues 530 to 564 (TAAAASGGSSSSGSFSSSGSSSSSDSESGSSSGSD) show a composition bias toward low complexity.

Its subcellular location is the nucleus. This Arabidopsis thaliana (Mouse-ear cress) protein is Transcription factor GTE2 (GTE2).